A 548-amino-acid chain; its full sequence is MENHDSFYKFCQLCQSLYDADDHQEKRDALERHFADFRGSAFMWRELLAPAESDAAADRELTLIFETILSIERTEQENVTRNLKCTIDGAAVPLSRESRITVPQVYEFINDLRGSGSRQERLRLIGQFAAGCTDEDLLTVFRVVSDHAHAGLSAEDVMELVEPWERFQKPVPPALAQPCRRLASVLVKHPEGALAEVKYDGERVQVHKAGSRFKFFSRTLKPVPEHKVAGCREHLTRAFPRARNFILDAEIVMVDGSGEALPFGTLGRLKQMEHADGHVCMYIFDCLRYNGVSYLNATPLDFRRRVLQDEIVPIEGRVVLSAMERTNTLSELRRFVHRTLATGAEGVVLKGRLSSYAPNKRDWFKMKKEHLCDGALVDTLDLVVLGAYYGTGRNCRKMSVFLMGCLDRESNVWTTVTKVHSGLADAALTALSKELRPLMAAPRDDLPEWFDCNESMVPHLLAADPEKMPVWEIACSEMKANIGAHTAGVTMRFPRVKRFRPDKDWSTATDLQEAEQLIRNSQENTKKTFARLATTYDGPSPNKKLKLN.

Residue Glu-196 participates in ATP binding. Lys-198 serves as the catalytic N6-AMP-lysine intermediate. 4 residues coordinate ATP: Arg-203, Arg-218, Glu-250, and Phe-284. Residue Glu-250 participates in a divalent metal cation binding. Glu-345 is an a divalent metal cation binding site. The ATP site is built by Arg-361 and Lys-365. A disordered region spans residues 515–548; that stretch reads EQLIRNSQENTKKTFARLATTYDGPSPNKKLKLN.

Belongs to the ATP-dependent DNA ligase family. The cofactor is a divalent metal cation.

The catalysed reaction is ATP + (deoxyribonucleotide)n-3'-hydroxyl + 5'-phospho-(deoxyribonucleotide)m = (deoxyribonucleotide)n+m + AMP + diphosphate.. Its function is as follows. Able to ligate a double-stranded synthetic DNA substrate containing a single nick and inefficiently ligated a 1 nucleotide gap but did not ligate a 2 nucleotide gap. It is able to ligate short, complementary overhangs but not blunt-ended double-stranded DNA. May be implicated in DNA repair and recombination. In Lepidoptera (butterflies and moths), this protein is DNA ligase (LIG).